A 334-amino-acid polypeptide reads, in one-letter code: tRNA-dihydrouridine(20/20a) synthase (334 aa).

FMN-binding positions include proline 17 to methionine 19 and glutamine 70. Residue cysteine 100 is the Proton donor of the active site. FMN is bound by residues lysine 139, histidine 171, asparagine 211 to glycine 213, and glycine 233 to arginine 234.

This sequence belongs to the Dus family. DusA subfamily. The cofactor is FMN.

The catalysed reaction is 5,6-dihydrouridine(20) in tRNA + NADP(+) = uridine(20) in tRNA + NADPH + H(+). It catalyses the reaction 5,6-dihydrouridine(20) in tRNA + NAD(+) = uridine(20) in tRNA + NADH + H(+). It carries out the reaction 5,6-dihydrouridine(20a) in tRNA + NADP(+) = uridine(20a) in tRNA + NADPH + H(+). The enzyme catalyses 5,6-dihydrouridine(20a) in tRNA + NAD(+) = uridine(20a) in tRNA + NADH + H(+). In terms of biological role, catalyzes the synthesis of 5,6-dihydrouridine (D), a modified base found in the D-loop of most tRNAs, via the reduction of the C5-C6 double bond in target uridines. Specifically modifies U20 and U20a in tRNAs. This chain is tRNA-dihydrouridine(20/20a) synthase (dus2), found in Synechocystis sp. (strain ATCC 27184 / PCC 6803 / Kazusa).